The primary structure comprises 340 residues: Phenylalanine--tRNA ligase alpha subunit (340 aa).

Glu255 serves as a coordination point for Mg(2+).

It belongs to the class-II aminoacyl-tRNA synthetase family. Phe-tRNA synthetase alpha subunit type 1 subfamily. Tetramer of two alpha and two beta subunits. Mg(2+) is required as a cofactor.

The protein localises to the cytoplasm. The catalysed reaction is tRNA(Phe) + L-phenylalanine + ATP = L-phenylalanyl-tRNA(Phe) + AMP + diphosphate + H(+). This is Phenylalanine--tRNA ligase alpha subunit from Syntrophomonas wolfei subsp. wolfei (strain DSM 2245B / Goettingen).